Reading from the N-terminus, the 195-residue chain is Imidazoleglycerol-phosphate dehydratase (195 aa).

This sequence belongs to the imidazoleglycerol-phosphate dehydratase family.

The protein resides in the cytoplasm. The enzyme catalyses D-erythro-1-(imidazol-4-yl)glycerol 3-phosphate = 3-(imidazol-4-yl)-2-oxopropyl phosphate + H2O. It functions in the pathway amino-acid biosynthesis; L-histidine biosynthesis; L-histidine from 5-phospho-alpha-D-ribose 1-diphosphate: step 6/9. This is Imidazoleglycerol-phosphate dehydratase from Trichlorobacter lovleyi (strain ATCC BAA-1151 / DSM 17278 / SZ) (Geobacter lovleyi).